The sequence spans 828 residues: Periplasmic nitrate reductase (828 aa).

A signal peptide (tat-type signal) is located at residues Met1–Ala31. Residues Ile39–Asp95 form the 4Fe-4S Mo/W bis-MGD-type domain. [4Fe-4S] cluster-binding residues include Cys46, Cys49, Cys53, and Cys81. Residues Lys83, Gln150, Asn175, Cys179, Trp212–Met219, Ser243–His247, Gln262–Asp264, Met372, Gln376, Asn482, Ser508–Asp509, Lys531, Asp558, and Thr718–Thr727 contribute to the Mo-bis(molybdopterin guanine dinucleotide) site. Phe794 is a binding site for substrate. Mo-bis(molybdopterin guanine dinucleotide) is bound by residues Asn802 and Lys819.

It belongs to the prokaryotic molybdopterin-containing oxidoreductase family. NasA/NapA/NarB subfamily. In terms of assembly, component of the periplasmic nitrate reductase NapAB complex composed of NapA and NapB. Requires [4Fe-4S] cluster as cofactor. Mo-bis(molybdopterin guanine dinucleotide) serves as cofactor. In terms of processing, predicted to be exported by the Tat system. The position of the signal peptide cleavage has not been experimentally proven.

The protein localises to the periplasm. It carries out the reaction 2 Fe(II)-[cytochrome] + nitrate + 2 H(+) = 2 Fe(III)-[cytochrome] + nitrite + H2O. Functionally, catalytic subunit of the periplasmic nitrate reductase complex NapAB. Receives electrons from NapB and catalyzes the reduction of nitrate to nitrite. The sequence is that of Periplasmic nitrate reductase from Escherichia coli O9:H4 (strain HS).